A 207-amino-acid chain; its full sequence is Recombination protein RecR (207 aa).

The segment at 60–75 (CRHCHNISDSDVCTIC) adopts a C4-type zinc-finger fold. The region spanning 83 to 178 (STLCVVENIR…RVSVIARGIA (96 aa)) is the Toprim domain.

It belongs to the RecR family.

May play a role in DNA repair. It seems to be involved in an RecBC-independent recombinational process of DNA repair. It may act with RecF and RecO. The chain is Recombination protein RecR from Porphyromonas gingivalis (strain ATCC BAA-308 / W83).